Consider the following 372-residue polypeptide: Putative glutamate--cysteine ligase 2 (372 aa).

The protein belongs to the glutamate--cysteine ligase type 2 family. YbdK subfamily.

The enzyme catalyses L-cysteine + L-glutamate + ATP = gamma-L-glutamyl-L-cysteine + ADP + phosphate + H(+). ATP-dependent carboxylate-amine ligase which exhibits weak glutamate--cysteine ligase activity. The sequence is that of Putative glutamate--cysteine ligase 2 from Gloeobacter violaceus (strain ATCC 29082 / PCC 7421).